The sequence spans 95 residues: MTEQVWNFAGIEGGASEIHGAVSTTAGLLDEGKASLTTLASAWGGTGSEAYQAVQARWDSTSNELNLALQNLAQTISEAGQTMAQTEAGVTGMFA.

Belongs to the WXG100 family. ESAT-6 subfamily. As to quaternary structure, forms a tight 1:1 complex with EsxB. An artificial EsxA-EsxB heterodimer interacts with EspA.

It localises to the secreted. Its function is as follows. An exported protein. Unlike its M.tuberculosis counterpart has poor pore forming ability in artificial liposomes, does not undergo conformational change at acidic pH. Mutation of 2 residues to those found in M.tuberculosis (25-TA-26 to IH) alters the properties of this protein so that it inserts into liposomes at acidic pH, forming pores, like its M.tuberculosis counterpart. The polypeptide is ESAT-6-like protein EsxA (Mycolicibacterium smegmatis (strain ATCC 700084 / mc(2)155) (Mycobacterium smegmatis)).